Here is a 579-residue protein sequence, read N- to C-terminus: Probable cholinesterase (579 aa).

A signal peptide spans methionine 1–alanine 19. 2 N-linked (GlcNAc...) asparagine; by host glycosylation sites follow: asparagine 77 and asparagine 144. Serine 217 functions as the Acyl-ester intermediate in the catalytic mechanism. N-linked (GlcNAc...) asparagine; by host glycans are attached at residues asparagine 257, asparagine 269, and asparagine 283. Glutamate 337 acts as the Charge relay system in catalysis. Residues asparagine 373 and asparagine 394 are each glycosylated (N-linked (GlcNAc...) asparagine; by host). Histidine 451 functions as the Charge relay system in the catalytic mechanism. Asparagine 469 is a glycosylation site (N-linked (GlcNAc...) asparagine; by host).

It belongs to the type-B carboxylesterase/lipase family.

The enzyme catalyses an acylcholine + H2O = a carboxylate + choline + H(+). Its function is as follows. May be involved in the disruption of the host membrane. The polypeptide is Probable cholinesterase (Acanthamoeba polyphaga mimivirus (APMV)).